The primary structure comprises 204 residues: Probable proteasome subunit beta type-3 (204 aa).

This sequence belongs to the peptidase T1B family. The 26S proteasome consists of a 20S proteasome core and two 19S regulatory subunits. The 20S proteasome core is composed of 28 subunits that are arranged in four stacked rings, resulting in a barrel-shaped structure. The two end rings are each formed by seven alpha subunits, and the two central rings are each formed by seven beta subunits. The catalytic chamber with the active sites is on the inside of the barrel.

It is found in the cytoplasm. The protein resides in the nucleus. Functionally, non-catalytic component of the proteasome, a multicatalytic proteinase complex which is characterized by its ability to cleave peptides with Arg, Phe, Tyr, Leu, and Glu adjacent to the leaving group at neutral or slightly basic pH. The proteasome has an ATP-dependent proteolytic activity. In Schizosaccharomyces pombe (strain 972 / ATCC 24843) (Fission yeast), this protein is Probable proteasome subunit beta type-3 (pup3).